The following is a 101-amino-acid chain: MILDSLLILAASVFCIGIYGLITSRNVVRILMSLELLLNAVNINFVAFSNFIDSIEIKGQVISIFIMTIAAAEAAVGLALILAIYRNRDTVDIESFNLLKR.

Transmembrane regions (helical) follow at residues 2-22, 32-52, and 64-84; these read ILDSLLILAASVFCIGIYGLI, MSLELLLNAVNINFVAFSNFI, and IFIMTIAAAEAAVGLALILAI.

Belongs to the complex I subunit 4L family. NDH is composed of at least 16 different subunits, 5 of which are encoded in the nucleus.

The protein localises to the plastid. It is found in the chloroplast thylakoid membrane. The enzyme catalyses a plastoquinone + NADH + (n+1) H(+)(in) = a plastoquinol + NAD(+) + n H(+)(out). It carries out the reaction a plastoquinone + NADPH + (n+1) H(+)(in) = a plastoquinol + NADP(+) + n H(+)(out). Functionally, NDH shuttles electrons from NAD(P)H:plastoquinone, via FMN and iron-sulfur (Fe-S) centers, to quinones in the photosynthetic chain and possibly in a chloroplast respiratory chain. The immediate electron acceptor for the enzyme in this species is believed to be plastoquinone. Couples the redox reaction to proton translocation, and thus conserves the redox energy in a proton gradient. The protein is NAD(P)H-quinone oxidoreductase subunit 4L, chloroplastic of Chlorokybus atmophyticus (Soil alga).